The sequence spans 700 residues: Calpain-2 catalytic subunit (700 aa).

At alanine 2 the chain carries N-acetylalanine. Residues 2 to 19 (AGIAAKLAKDREAAEGLG) constitute a propeptide, anchors to the small subunit. The region spanning 45-344 (LFQDPSFPAL…YSRLEICNLT (300 aa)) is the Calpain catalytic domain. Residues glycine 91 and aspartate 96 each contribute to the Ca(2+) site. Cysteine 105 is an active-site residue. Positions 175, 229, and 230 each coordinate Ca(2+). Catalysis depends on residues histidine 262 and asparagine 286. The Ca(2+) site is built by glutamate 292, aspartate 299, and glutamate 323. Positions 345 to 514 (PDTLTSDSYK…KKADYQVVDD (170 aa)) are domain III. Positions 515–529 (EIEANIDEIDISEDD) are linker. The tract at residues 530 to 700 (IDDGFRRLFA…LISWLSFSVL (171 aa)) is domain IV. Alanine 542, aspartate 545, glutamate 547, glutamate 552, aspartate 585, aspartate 587, serine 589, lysine 591, glutamate 596, aspartate 615, aspartate 617, serine 619, threonine 621, glutamate 626, aspartate 658, and asparagine 661 together coordinate Ca(2+). EF-hand domains follow at residues 572–597 (FSIE…LKEF), 602–637 (TKIQ…AGFK), and 652–672 (DDDL…LETL).

It belongs to the peptidase C2 family. In terms of assembly, forms a heterodimer with a small (regulatory) subunit (CAPNS1). Interacts with CPEB3; this leads to cleavage of CPEB3. Ca(2+) serves as cofactor. In terms of tissue distribution, ubiquitous.

The protein resides in the cytoplasm. The protein localises to the cell membrane. It carries out the reaction Broad endopeptidase specificity.. With respect to regulation, activated by 200-1000 micromolar concentrations of calcium and inhibited by calpastatin. Functionally, calcium-regulated non-lysosomal thiol-protease which catalyzes limited proteolysis of substrates involved in cytoskeletal remodeling and signal transduction. Proteolytically cleaves MYOC at 'Arg-226'. Proteolytically cleaves CPEB3 following neuronal stimulation which abolishes CPEB3 translational repressor activity, leading to translation of CPEB3 target mRNAs. The polypeptide is Calpain-2 catalytic subunit (CAPN2) (Bos taurus (Bovine)).